Reading from the N-terminus, the 616-residue chain is Chaperone protein HscA (616 aa).

It belongs to the heat shock protein 70 family.

Its function is as follows. Chaperone involved in the maturation of iron-sulfur cluster-containing proteins. Has a low intrinsic ATPase activity which is markedly stimulated by HscB. Involved in the maturation of IscU. The protein is Chaperone protein HscA of Salmonella agona (strain SL483).